The following is a 943-amino-acid chain: Centromere protein C (943 aa).

Residue Lys45 forms a Glycyl lysine isopeptide (Lys-Gly) (interchain with G-Cter in SUMO2) linkage. Positions Cys70–Lys91 are disordered. Ser73 and Ser96 each carry phosphoserine. Residue Lys119 forms a Glycyl lysine isopeptide (Lys-Gly) (interchain with G-Cter in SUMO2) linkage. Thr130 carries the post-translational modification Phosphothreonine. Lys134 is covalently cross-linked (Glycyl lysine isopeptide (Lys-Gly) (interchain with G-Cter in SUMO2)). Residue Ser146 is modified to Phosphoserine. Lys180 is covalently cross-linked (Glycyl lysine isopeptide (Lys-Gly) (interchain with G-Cter in SUMO2)). Thr183 is modified (phosphothreonine). At Ser189 the chain carries Phosphoserine. Glycyl lysine isopeptide (Lys-Gly) (interchain with G-Cter in SUMO2) cross-links involve residues Lys212 and Lys217. The span at Val224–Pro239 shows a compositional bias: basic and acidic residues. Positions Val224–Ser250 are disordered. Ser225 is subject to Phosphoserine. Residues Lys238 and Lys260 each participate in a glycyl lysine isopeptide (Lys-Gly) (interchain with G-Cter in SUMO2) cross-link. The Nuclear localization signal signature appears at Lys259 to Lys273. Residue Ser261 is modified to Phosphoserine. Residues Lys271, Lys273, and Lys297 each participate in a glycyl lysine isopeptide (Lys-Gly) (interchain with G-Cter in SUMO2) cross-link. Ser316, Ser333, Ser376, and Ser397 each carry phosphoserine. Residues Leu358–Asp377 are disordered. The interval Tyr403–Val513 is disordered. Over residues Arg412–Met426 the composition is skewed to basic residues. Composition is skewed to basic and acidic residues over residues Gln438 to Glu463 and Thr488 to Pro510. Ser439 bears the Phosphoserine mark. Residue Lys440 forms a Glycyl lysine isopeptide (Lys-Gly) (interchain with G-Cter in SUMO2) linkage. A Nuclear localization signal motif is present at residues Lys484–Arg499. At Ser528 the chain carries Phosphoserine. Lys534 is covalently cross-linked (Glycyl lysine isopeptide (Lys-Gly) (interchain with G-Cter in SUMO2)). 2 disordered regions span residues Glu537–Gly587 and Asp632–Lys717. Ser538 bears the Phosphoserine mark. The short motif at Arg558 to Lys574 is the Nuclear localization signal element. Residues Asn570–Thr583 are compositionally biased toward basic residues. The segment covering Cys633 to Asp672 has biased composition (polar residues). Lys677 participates in a covalent cross-link: Glycyl lysine isopeptide (Lys-Gly) (interchain with G-Cter in SUMO2). Phosphoserine is present on residues Ser684, Ser709, and Ser710. Residues Val706–Gln715 are compositionally biased toward basic and acidic residues. Lys727 participates in a covalent cross-link: Glycyl lysine isopeptide (Lys-Gly) (interchain with G-Cter in SUMO2). The residue at position 734 (Thr734) is a Phosphothreonine. Residues Val737–Gln759 are MIF2 homology domain II. A phosphoserine mark is found at Ser763 and Ser773. The short motif at Lys780–Arg798 is the Nuclear localization signal element. Lys807 is covalently cross-linked (Glycyl lysine isopeptide (Lys-Gly) (interchain with G-Cter in SUMO2)). The interval Leu890–Arg943 is MIF2 homology domain III.

Belongs to the CENP-C/MIF2 family. As to quaternary structure, oligomer. Component of the CENPA-NAC complex, at least composed of CENPA, CENPC, CENPH, CENPM, CENPN, CENPT and CENPU. The CENPA-NAC complex interacts with the CENPA-CAD complex, composed of CENPI, CENPK, CENPL, CENPO, CENPP, CENPQ, CENPR and CENPS. Binds to DAXX. Interacts with DNMT3B. Interacts directly with CENPA. Identified in a centromere complex containing histones H2A, H2B and H4, and at least CENPA, CENPB, CENPC, CENPT, CENPN, HJURP, SUPT16H, SSRP1 and RSF1. Interacts with MEIKIN.

It localises to the nucleus. The protein localises to the chromosome. It is found in the centromere. Its subcellular location is the kinetochore. Functionally, component of the CENPA-NAC (nucleosome-associated) complex, a complex that plays a central role in assembly of kinetochore proteins, mitotic progression and chromosome segregation. The CENPA-NAC complex recruits the CENPA-CAD (nucleosome distal) complex and may be involved in incorporation of newly synthesized CENPA into centromeres. CENPC recruits DNA methylation and DNMT3B to both centromeric and pericentromeric satellite repeats and regulates the histone code in these regions. The polypeptide is Centromere protein C (CENPC) (Homo sapiens (Human)).